The chain runs to 237 residues: LexA repressor (237 aa).

A DNA-binding region (H-T-H motif) is located at residues 26–46 (FDEMKEALDLRSKSGIHRLIT). Catalysis depends on for autocatalytic cleavage activity residues Ser158 and Lys196.

It belongs to the peptidase S24 family. As to quaternary structure, homodimer.

It carries out the reaction Hydrolysis of Ala-|-Gly bond in repressor LexA.. Represses a number of genes involved in the response to DNA damage (SOS response), including recA and lexA. In the presence of single-stranded DNA, RecA interacts with LexA causing an autocatalytic cleavage which disrupts the DNA-binding part of LexA, leading to derepression of the SOS regulon and eventually DNA repair. The chain is LexA repressor from Xanthobacter autotrophicus (strain ATCC BAA-1158 / Py2).